Reading from the N-terminus, the 417-residue chain is Serine hydroxymethyltransferase 3 (417 aa).

Residues Leu121 and 125 to 127 each bind (6S)-5,6,7,8-tetrahydrofolate; that span reads GHL. The residue at position 229 (Lys229) is an N6-(pyridoxal phosphate)lysine. 354–356 contacts (6S)-5,6,7,8-tetrahydrofolate; sequence SPF.

This sequence belongs to the SHMT family. Homodimer. Requires pyridoxal 5'-phosphate as cofactor.

The protein localises to the cytoplasm. The enzyme catalyses (6R)-5,10-methylene-5,6,7,8-tetrahydrofolate + glycine + H2O = (6S)-5,6,7,8-tetrahydrofolate + L-serine. It functions in the pathway one-carbon metabolism; tetrahydrofolate interconversion. The protein operates within amino-acid biosynthesis; glycine biosynthesis; glycine from L-serine: step 1/1. In terms of biological role, catalyzes the reversible interconversion of serine and glycine with tetrahydrofolate (THF) serving as the one-carbon carrier. This reaction serves as the major source of one-carbon groups required for the biosynthesis of purines, thymidylate, methionine, and other important biomolecules. Also exhibits THF-independent aldolase activity toward beta-hydroxyamino acids, producing glycine and aldehydes, via a retro-aldol mechanism. This Pseudomonas aeruginosa (strain ATCC 15692 / DSM 22644 / CIP 104116 / JCM 14847 / LMG 12228 / 1C / PRS 101 / PAO1) protein is Serine hydroxymethyltransferase 3.